Consider the following 291-residue polypeptide: MDKIIKSISTSGSFRAYVLDCTETVRTAQEKHQTLSSSTVALGRTLIANQILAANQKGNSKVTVKVIGDSSFGHIISVADTKGNVKGYIQNTGVDIKKTATGEVLVGPFMGNGHFVVITDYGTGQPYTSTTPLITGEIGEDFAYYLTESEQTPSAVGLNVLLDDEDKVKVAGGFMLQVLPGASDEEISRYEKRIQEMPSISSLLESENHIESLLSAIYGEDDYKRLSEDSLAFYCDCSKERFEAALLTLGTKELQAMKDEDKGVEITCQFCNQTYYFTEEDLEKIINDSIK.

2 cysteine pairs are disulfide-bonded: Cys-235–Cys-237 and Cys-268–Cys-271.

It belongs to the HSP33 family. Post-translationally, under oxidizing conditions two disulfide bonds are formed involving the reactive cysteines. Under reducing conditions zinc is bound to the reactive cysteines and the protein is inactive.

It localises to the cytoplasm. Redox regulated molecular chaperone. Protects both thermally unfolding and oxidatively damaged proteins from irreversible aggregation. Plays an important role in the bacterial defense system toward oxidative stress. The sequence is that of 33 kDa chaperonin from Streptococcus agalactiae serotype Ia (strain ATCC 27591 / A909 / CDC SS700).